Reading from the N-terminus, the 307-residue chain is CRISPR-associated endonuclease Cas1 2 (307 aa).

Glu-142, His-206, and Glu-221 together coordinate Mn(2+).

The protein belongs to the CRISPR-associated endonuclease Cas1 family. As to quaternary structure, homodimer, forms a heterotetramer with a Cas2 homodimer. Forms oligomers, probably binds nucleic acids as a homodimer. It depends on Mg(2+) as a cofactor. Mn(2+) serves as cofactor.

Functionally, CRISPR (clustered regularly interspaced short palindromic repeat), is an adaptive immune system that provides protection against mobile genetic elements (viruses, transposable elements and conjugative plasmids). CRISPR clusters contain spacers, sequences complementary to antecedent mobile elements, and target invading nucleic acids. CRISPR clusters are transcribed and processed into CRISPR RNA (crRNA). Acts as a dsDNA endonuclease. Involved in the integration of spacer DNA into the CRISPR cassette. In terms of biological role, in vitro catalyzes a concerted transesterification reaction on branched DNA, as would be expected during integration of protospacers into the CRISPR leader sequence; Cas2 is not required in vitro. This reaction requires a 3'-OH group at the branch point. Binds ss- and dsDNA and ss- and dsRNA with approximately equal affinity. May be able to anneal complementary DNA strands. The polypeptide is CRISPR-associated endonuclease Cas1 2 (Saccharolobus solfataricus (strain ATCC 35092 / DSM 1617 / JCM 11322 / P2) (Sulfolobus solfataricus)).